The primary structure comprises 732 residues: Serine/threonine-protein kinase CBK1 (732 aa).

Residues 111–240 (SFDNHLNVDP…STEAANSDMT (130 aa)) form a disordered region. The span at 119-159 (DPNNTERFTSMDSMNFQPPASTFTQLGNGSSTNLSEISSGQ) shows a compositional bias: polar residues. The span at 160-171 (NSLLSNHSVNNL) shows a compositional bias: low complexity. The segment covering 172–183 (PTALTSDTSPPV) has biased composition (polar residues). The span at 185-221 (QHPQFQPQQQQQQQQPQQQQIFQQQQQQQQQQQQPQQ) shows a compositional bias: low complexity. A compositionally biased stretch (polar residues) spans 222 to 240 (SRAVVNQSVSTEAANSDMT). A coiled-coil region spans residues 281-310 (HAIERNQRRLELENKIANEDIGSSEERKNR). The Protein kinase domain occupies 335 to 647 (FHTVKVIGKG…AEEIKQHPFF (313 aa)). ATP contacts are provided by residues 341–349 (IGKGAFGEV) and K364. D458 functions as the Proton acceptor in the catalytic mechanism. The AGC-kinase C-terminal domain maps to 648–730 (RGVDWDSIRD…SRFDYLTRKN (83 aa)).

Belongs to the protein kinase superfamily. STE Ser/Thr protein kinase family. COT1 subfamily. As to quaternary structure, interacts with MOB2 and BCR1.

The protein resides in the bud neck. It is found in the cell tip. It catalyses the reaction L-seryl-[protein] + ATP = O-phospho-L-seryl-[protein] + ADP + H(+). It carries out the reaction L-threonyl-[protein] + ATP = O-phospho-L-threonyl-[protein] + ADP + H(+). Serine/threonine-protein kinase required for wild-type hyphal growth and transcriptional regulation of cell-wall-associated genes. Involved in the biofilm formation through phosphorylation of the master regulator of biofilm formation BCR1. The sequence is that of Serine/threonine-protein kinase CBK1 (CBK1) from Candida albicans (strain SC5314 / ATCC MYA-2876) (Yeast).